The following is a 119-amino-acid chain: Dihydroneopterin aldolase (119 aa).

Residues Glu-21, Tyr-53, and 72-73 contribute to the substrate site; that span reads IE. The active-site Proton donor/acceptor is the Lys-99.

This sequence belongs to the DHNA family.

It carries out the reaction 7,8-dihydroneopterin = 6-hydroxymethyl-7,8-dihydropterin + glycolaldehyde. The protein operates within cofactor biosynthesis; tetrahydrofolate biosynthesis; 2-amino-4-hydroxy-6-hydroxymethyl-7,8-dihydropteridine diphosphate from 7,8-dihydroneopterin triphosphate: step 3/4. Catalyzes the conversion of 7,8-dihydroneopterin to 6-hydroxymethyl-7,8-dihydropterin. The protein is Dihydroneopterin aldolase (folB) of Streptococcus pyogenes serotype M3 (strain ATCC BAA-595 / MGAS315).